Reading from the N-terminus, the 653-residue chain is Beta-galactosidase (653 aa).

Positions 1–22 (MPGVVRLLALLLVPLLLGSARG) are cleaved as a signal peptide. Residues 23–27 (LHNAT) constitute a propeptide that is removed on maturation. Asparagine 25 carries an N-linked (GlcNAc...) asparagine glycan. Substrate is bound at residue tyrosine 82. An N-linked (GlcNAc...) asparagine glycan is attached at asparagine 96. 2 residues coordinate substrate: glutamate 128 and asparagine 186. Glutamate 187 acts as the Proton donor in catalysis. Residues cysteine 194 and cysteine 229 are joined by a disulfide bond. N-linked (GlcNAc...) asparagine glycosylation occurs at asparagine 246. The active-site Nucleophile is the glutamate 267. Tyrosine 332 is a binding site for substrate. Residues asparagine 463, asparagine 497, and asparagine 554 are each glycosylated (N-linked (GlcNAc...) asparagine). Cysteine 625 and cysteine 633 are oxidised to a cystine.

Belongs to the glycosyl hydrolase 35 family. As to quaternary structure, homodimer. May form higher multimers.

Its subcellular location is the lysosome. The enzyme catalyses Hydrolysis of terminal non-reducing beta-D-galactose residues in beta-D-galactosides.. In terms of biological role, cleaves beta-linked terminal galactosyl residues from gangliosides, glycoproteins, and glycosaminoglycans. The sequence is that of Beta-galactosidase (GLB1) from Bos taurus (Bovine).